The primary structure comprises 1617 residues: Mitogen-activated protein kinase kinae kinase bck1 (1617 aa).

9 disordered regions span residues 1-73 (MDGQ…SQLQ), 167-199 (GPVH…RTMP), 211-253 (SVAS…GGMS), 345-399 (RQIH…SPNL), 455-555 (DHRR…SSSY), 568-633 (KRSK…LRGK), 739-820 (GVPL…ISPE), 832-1144 (EHKR…RGDI), and 1164-1277 (DIDL…EILR). Positions 19-28 (TQPSQSHMLS) are enriched in low complexity. Over residues 44 to 60 (VMPPPPPGPPPGPPPGP) the composition is skewed to pro residues. Residues 220–248 (TAQNHQSQTGQTNEPTKSPSHRQNNSNTL) show a composition bias toward polar residues. A compositionally biased stretch (polar residues) spans 482-504 (KSGSPATQHATLNQGLSSSSTGD). The segment covering 524-533 (RYYESRKGQE) has biased composition (basic and acidic residues). Composition is skewed to polar residues over residues 535–555 (IRPS…SSSY) and 586–596 (ESPTSPVNLRQ). 2 stretches are compositionally biased toward basic and acidic residues: residues 832-841 (EHKREVERKQ) and 871-885 (FDER…KKAD). Polar residues-rich tracts occupy residues 897 to 907 (PQESYTLTRIN) and 956 to 980 (GGKQ…PQSS). Basic and acidic residues-rich tracts occupy residues 1128–1140 (EDER…DSFA) and 1189–1198 (PENDLHKKEN). Polar residues-rich tracts occupy residues 1199–1208 (QPSSSYTGEM) and 1257–1272 (NQAS…NQKS). Positions 1323–1596 (IIRGQLIGKG…QTLLTRHPFC (274 aa)) constitute a Protein kinase domain. ATP is bound by residues 1329-1337 (IGKGTYGRV) and Lys-1352. The Proton acceptor role is filled by Asp-1453.

The protein belongs to the protein kinase superfamily. STE Ser/Thr protein kinase family. MAP kinase kinase subfamily.

The catalysed reaction is L-seryl-[protein] + ATP = O-phospho-L-seryl-[protein] + ADP + H(+). It carries out the reaction L-threonyl-[protein] + ATP = O-phospho-L-threonyl-[protein] + ADP + H(+). Mitogen-activated kinase kinase kinase (MAPKKK), part of the cell wall integrity (CWI) signaling pathway composed by three protein kinases bck1, mkk2 and mpkA and responsible for the maintaining of cell-wall integrity balance. The CWI pathway also regulates the oxidative stress response, as well as the production of some secondary metabolites including pyomelanin. The polypeptide is Mitogen-activated protein kinase kinae kinase bck1 (Aspergillus fumigatus (strain CBS 144.89 / FGSC A1163 / CEA10) (Neosartorya fumigata)).